Reading from the N-terminus, the 393-residue chain is Asparagine--oxo-acid transaminase (393 aa).

The L-asparagine site is built by Gly39, Trp126, and Asn176. Lys239 is subject to N6-(pyridoxal phosphate)lysine. Arg370 provides a ligand contact to L-asparagine.

This sequence belongs to the class-I pyridoxal-phosphate-dependent aminotransferase family. It depends on pyridoxal 5'-phosphate as a cofactor.

The enzyme catalyses a 2-oxocarboxylate + L-asparagine = 2-oxosuccinamate + an L-alpha-amino acid. It carries out the reaction L-asparagine + 2-oxoglutarate = 2-oxosuccinamate + L-glutamate. In terms of biological role, catalyzes the transamination reaction between L-asparagine and 2-oxoglutarate to produce L-glutamate and 2-oxosuccinamate. Is not active with pyruvate as amine acceptor. May also use other amino acids as substrates. The chain is Asparagine--oxo-acid transaminase from Streptococcus mutans serotype c (strain ATCC 700610 / UA159).